Consider the following 203-residue polypeptide: Outer-membrane lipoprotein carrier protein (203 aa).

Positions 1–21 (MKKIAITCALLSSLVASSVWA) are cleaved as a signal peptide.

The protein belongs to the LolA family. In terms of assembly, monomer.

It is found in the periplasm. Participates in the translocation of lipoproteins from the inner membrane to the outer membrane. Only forms a complex with a lipoprotein if the residue after the N-terminal Cys is not an aspartate (The Asp acts as a targeting signal to indicate that the lipoprotein should stay in the inner membrane). In Escherichia coli O139:H28 (strain E24377A / ETEC), this protein is Outer-membrane lipoprotein carrier protein.